The following is a 337-amino-acid chain: tRNA-dihydrouridine synthase B (337 aa).

Residues 19 to 21 and Gln73 each bind FMN; that span reads PMA. The active-site Proton donor is the Cys103. FMN contacts are provided by residues Lys142, 203–205, and 227–228; these read NGD and GR.

Belongs to the Dus family. DusB subfamily. The cofactor is FMN.

It catalyses the reaction a 5,6-dihydrouridine in tRNA + NAD(+) = a uridine in tRNA + NADH + H(+). The enzyme catalyses a 5,6-dihydrouridine in tRNA + NADP(+) = a uridine in tRNA + NADPH + H(+). Catalyzes the synthesis of 5,6-dihydrouridine (D), a modified base found in the D-loop of most tRNAs, via the reduction of the C5-C6 double bond in target uridines. This chain is tRNA-dihydrouridine synthase B, found in Pseudomonas syringae pv. tomato (strain ATCC BAA-871 / DC3000).